Reading from the N-terminus, the 623-residue chain is Phosphoenolpyruvate carboxykinase [GTP] (623 aa).

Residues Arg86 and 220–222 (YGG) contribute to the substrate site. Lys229 and His248 together coordinate Mn(2+). A substrate-binding site is contributed by Ser270. 271 to 276 (MCGKTS) serves as a coordination point for GTP. Residue Cys272 is part of the active site. Position 289 (Asp289) interacts with Mn(2+). Residue 384–386 (NAR) participates in substrate binding. Arg386 and Arg418 together coordinate GTP.

Belongs to the phosphoenolpyruvate carboxykinase [GTP] family. Homotetramer. It depends on Mn(2+) as a cofactor.

It localises to the cytoplasm. It carries out the reaction oxaloacetate + GTP = phosphoenolpyruvate + GDP + CO2. The protein operates within carbohydrate biosynthesis; gluconeogenesis. Functionally, involved in the gluconeogenesis. Catalyzes the conversion of oxaloacetate (OAA) to phosphoenolpyruvate (PEP), the rate-limiting step in the metabolic pathway that produces glucose from lactate and other precursors derived from the citric acid cycle. This Thermococcus kodakarensis (strain ATCC BAA-918 / JCM 12380 / KOD1) (Pyrococcus kodakaraensis (strain KOD1)) protein is Phosphoenolpyruvate carboxykinase [GTP] (pckG).